Here is a 339-residue protein sequence, read N- to C-terminus: Transcription initiation factor IIB (339 aa).

The segment at 39-70 (EELICPVCGSKSIIKDYERAEIVCEMCGCVLQ) adopts a TFIIB-type zinc-finger fold. The Zn(2+) site is built by Cys43, Cys46, Cys62, and Cys65. 2 consecutive repeat copies span residues 156-239 (SELD…SREL) and 250-331 (DYVP…ELTE).

Belongs to the TFIIB family.

Its function is as follows. Stabilizes TBP binding to an archaeal box-A promoter. Also responsible for recruiting RNA polymerase II to the pre-initiation complex (DNA-TBP-TFIIB). The polypeptide is Transcription initiation factor IIB (Methanococcus maripaludis (strain DSM 14266 / JCM 13030 / NBRC 101832 / S2 / LL)).